The primary structure comprises 91 residues: Small ribosomal subunit protein uS19 (91 aa).

This sequence belongs to the universal ribosomal protein uS19 family.

Protein S19 forms a complex with S13 that binds strongly to the 16S ribosomal RNA. This Bordetella petrii (strain ATCC BAA-461 / DSM 12804 / CCUG 43448) protein is Small ribosomal subunit protein uS19.